A 554-amino-acid chain; its full sequence is MFS-type transporter tstD (554 aa).

Composition is skewed to polar residues over residues 1–10 (MPEPFNSTMP) and 27–38 (QDSNQPPEMSAS). The segment at 1-68 (MPEPFNSTMP…ESENNEPYSV (68 aa)) is disordered. An N-linked (GlcNAc...) asparagine glycan is attached at Asn-6. Basic and acidic residues predominate over residues 39 to 48 (SEKKHPENEN). A helical membrane pass occupies residues 76–96 (LMVLAASLAGFFSPLSASIYY). N-linked (GlcNAc...) asparagine glycosylation is found at Asn-107 and Asn-114. A run of 5 helical transmembrane segments spans residues 115 to 135 (LTVT…ASFS), 142 to 162 (PGYA…ALQN), 173 to 193 (LQSA…SDII), 202 to 222 (IAFA…IGGL), and 231 to 251 (WIFW…FLFF). Residues 281–300 (KEKQRQQRAENEEENANRQR) are disordered. The next 3 membrane-spanning stretches (helical) occupy residues 311 to 331 (VFVV…GVAF), 354 to 374 (IKVA…ALST), and 413 to 433 (IALP…WLMT). Asn-437 carries N-linked (GlcNAc...) asparagine glycosylation. Helical transmembrane passes span 442–462 (IILL…LNVL), 473–493 (MVTA…AAMI), and 504–524 (WSYT…LLTM).

The protein belongs to the major facilitator superfamily.

The protein localises to the membrane. MFS-type transporter; part of the gene cluster that mediates the biosynthesis of the antihypercholesterolemic agents phomoidrides which are dimeric anhydrides. This is MFS-type transporter tstD from Talaromyces stipitatus (strain ATCC 10500 / CBS 375.48 / QM 6759 / NRRL 1006) (Penicillium stipitatum).